Consider the following 266-residue polypeptide: 15-hydroxyprostaglandin dehydrogenase [NAD(+)] (266 aa).

NAD(+)-binding positions include 12-20 (GAAQGIGKA), 36-37 (DW), 63-65 (CDV), and asparagine 91. Substrate-binding residues include serine 138 and glutamine 148. Tyrosine 151 acts as the Proton acceptor in catalysis. NAD(+) contacts are provided by residues 151-155 (YCASK) and 186-188 (VKT).

This sequence belongs to the short-chain dehydrogenases/reductases (SDR) family. Homodimer.

It is found in the cytoplasm. The enzyme catalyses prostaglandin E2 + NAD(+) = 15-oxoprostaglandin E2 + NADH + H(+). It carries out the reaction (15S)-hydroxy-(5Z,8Z,11Z,13E)-eicosatetraenoate + NAD(+) = 15-oxo-(5Z,8Z,11Z,13E)-eicosatetraenoate + NADH + H(+). The catalysed reaction is (11R)-hydroxy-(5Z,8Z,12E,14Z)-eicosatetraenoate + NAD(+) = 11-oxo-(5Z,8Z,12E,14Z)-eicosatetraenoate + NADH + H(+). It catalyses the reaction lipoxin A4 + NAD(+) = 15-oxo-(5S,6R)-dihydroxy-(7E,9E,11Z,13E)-eicosatetraenoate + NADH + H(+). The enzyme catalyses 15-oxo-(5S,6R)-dihydroxy-(7E,9E,11Z)-eicosatrienoate + NADH + H(+) = (5S,6R,15S)-trihydroxy-(7E,9E,11Z)-eicosatrienoate + NAD(+). It carries out the reaction prostaglandin A1 + NAD(+) = 15-oxo-prostaglandin A1 + NADH + H(+). The catalysed reaction is prostaglandin E1 + NAD(+) = 15-oxoprostaglandin E1 + NADH + H(+). It catalyses the reaction 14-hydroxy-(4Z,7Z,10Z,12E,16Z,19Z)-docosahexaenoate + NAD(+) = 14-oxo-(4Z,7Z,10Z,12E,16Z,19Z)-docosahexaenoate + NADH + H(+). The enzyme catalyses resolvin E1 + NAD(+) = 18-oxo-resolvin E1 + NADH + H(+). It carries out the reaction resolvin D1 + NAD(+) = 8-oxoresolvin D1 + NADH + H(+). The catalysed reaction is resolvin D1 + NAD(+) = 17-oxoresolvin D1 + NADH + H(+). It catalyses the reaction resolvin D2 + NAD(+) = 7-oxoresolvin D2 + NADH + H(+). The enzyme catalyses resolvin D2 + NAD(+) = 16-oxoresolvin D2 + NADH + H(+). Its function is as follows. Catalyzes the NAD-dependent dehydrogenation (oxidation) of a broad array of hydroxylated polyunsaturated fatty acids (mainly eicosanoids and docosanoids, including prostaglandins, lipoxins and resolvins), yielding their corresponding keto (oxo) metabolites. Decreases the levels of the pro-proliferative prostaglandins such as prostaglandin E2 (whose activity is increased in cancer because of an increase in the expression of cyclooxygenase 2) and generates oxo-fatty acid products that can profoundly influence cell function by abrogating pro-inflammatory cytokine expression. Converts resolvins E1, D1 and D2 to their oxo products, which represents a mode of resolvin inactivation. Resolvin E1 plays important roles during the resolution phase of acute inflammation, while resolvins D1 and D2 have a unique role in obesity-induced adipose inflammation. The polypeptide is 15-hydroxyprostaglandin dehydrogenase [NAD(+)] (Hpgd) (Rattus norvegicus (Rat)).